The primary structure comprises 214 residues: 14-3-3 protein homolog 2 (214 aa).

This sequence belongs to the 14-3-3 family.

This Schistosoma mansoni (Blood fluke) protein is 14-3-3 protein homolog 2.